The following is a 480-amino-acid chain: Chromosomal replication initiator protein DnaA (480 aa).

Positions methionine 1–arginine 71 are domain I, interacts with DnaA modulators. The domain II stretch occupies residues arginine 71–serine 142. Residues arginine 143–alanine 359 form a domain III, AAA+ region region. ATP is bound by residues glycine 187, glycine 189, lysine 190, and threonine 191. The tract at residues arginine 360–glycine 480 is domain IV, binds dsDNA.

Belongs to the DnaA family. Oligomerizes as a right-handed, spiral filament on DNA at oriC.

The protein localises to the cytoplasm. In terms of biological role, plays an essential role in the initiation and regulation of chromosomal replication. ATP-DnaA binds to the origin of replication (oriC) to initiate formation of the DNA replication initiation complex once per cell cycle. Binds the DnaA box (a 9 base pair repeat at the origin) and separates the double-stranded (ds)DNA. Forms a right-handed helical filament on oriC DNA; dsDNA binds to the exterior of the filament while single-stranded (ss)DNA is stabiized in the filament's interior. The ATP-DnaA-oriC complex binds and stabilizes one strand of the AT-rich DNA unwinding element (DUE), permitting loading of DNA polymerase. After initiation quickly degrades to an ADP-DnaA complex that is not apt for DNA replication. Binds acidic phospholipids. The chain is Chromosomal replication initiator protein DnaA from Bordetella bronchiseptica (strain ATCC BAA-588 / NCTC 13252 / RB50) (Alcaligenes bronchisepticus).